Here is a 132-residue protein sequence, read N- to C-terminus: Glycine cleavage system H protein (132 aa).

The Lipoyl-binding domain maps to 27–109 (FATIGISAFA…FDFGWILKVK (83 aa)). K68 carries the post-translational modification N6-lipoyllysine.

The protein belongs to the GcvH family. As to quaternary structure, the glycine cleavage system is composed of four proteins: P, T, L and H. (R)-lipoate is required as a cofactor.

Functionally, the glycine cleavage system catalyzes the degradation of glycine. The H protein shuttles the methylamine group of glycine from the P protein to the T protein. This chain is Glycine cleavage system H protein, found in Rhodopirellula baltica (strain DSM 10527 / NCIMB 13988 / SH1).